The chain runs to 293 residues: Polyamine aminopropyltransferase (293 aa).

One can recognise a PABS domain in the interval 10–244 (HIWFTEYHNN…GFWSFTLASK (235 aa)). S-methyl-5'-thioadenosine is bound at residue glutamine 39. Histidine 70 and aspartate 94 together coordinate spermidine. S-methyl-5'-thioadenosine contacts are provided by residues glutamate 114 and 145–146 (DG). The active-site Proton acceptor is aspartate 163. Residue 163 to 166 (DCPD) coordinates spermidine. Proline 170 provides a ligand contact to S-methyl-5'-thioadenosine.

It belongs to the spermidine/spermine synthase family. In terms of assembly, homodimer or homotetramer.

The protein localises to the cytoplasm. The catalysed reaction is S-adenosyl 3-(methylsulfanyl)propylamine + putrescine = S-methyl-5'-thioadenosine + spermidine + H(+). It functions in the pathway amine and polyamine biosynthesis; spermidine biosynthesis; spermidine from putrescine: step 1/1. In terms of biological role, catalyzes the irreversible transfer of a propylamine group from the amino donor S-adenosylmethioninamine (decarboxy-AdoMet) to putrescine (1,4-diaminobutane) to yield spermidine. The protein is Polyamine aminopropyltransferase of Methanocaldococcus jannaschii (strain ATCC 43067 / DSM 2661 / JAL-1 / JCM 10045 / NBRC 100440) (Methanococcus jannaschii).